The chain runs to 993 residues: Serine/threonine-protein phosphatase 6 regulatory ankyrin repeat subunit B (993 aa).

ANK repeat units follow at residues 7 to 36 (TDQP…DVNT), 40 to 69 (EKRT…RVNA), 73 to 102 (MWLT…DVNA), 106 to 135 (NWQT…SVNV), 139 to 168 (GGRT…NINA), 172 to 201 (KDRR…EVTC), 205 to 234 (KGYT…EIDE), 238 to 267 (YGNT…NVNQ), 271 to 301 (NGFT…DVNI), 305 to 334 (DGKS…EIDC), 338 to 367 (DGNT…DTAK), 371 to 400 (HSMF…EIDT), 404 to 433 (FGRT…DFHK), 437 to 466 (CGRT…NVNE), 470 to 498 (WGRT…DNSE), 531 to 561 (EGYN…GFEE), 566 to 595 (ATKS…DLDI), 599 to 628 (KGRT…SIFV), 633 to 662 (TKRT…NPEA), 669 to 698 (KGQT…NVDT), 702 to 731 (LGCT…SILC), 735 to 764 (RGRT…SEED), 771 to 800 (QGYT…FRKF), 803 to 832 (NPFT…SSIV), 838 to 867 (KGRT…PVNA), 871 to 901 (SGKT…DLTV), 905 to 934 (DLNT…DESL), and 941 to 970 (ALQT…CVLA).

Protein phosphatase 6 (PP6) holoenzyme is proposed to be a heterotrimeric complex formed by the catalytic subunit, a SAPS domain-containing subunit (PP6R) and an ankyrin repeat-domain containing regulatory subunit (ARS). Interacts with PPP6R1.

Functionally, putative regulatory subunit of protein phosphatase 6 (PP6) that may be involved in the recognition of phosphoprotein substrates. This is Serine/threonine-protein phosphatase 6 regulatory ankyrin repeat subunit B (ANKRD44) from Homo sapiens (Human).